We begin with the raw amino-acid sequence, 211 residues long: Large ribosomal subunit protein eL13 (211 aa).

At Lys-16 the chain carries N6-acetyllysine. Phosphoserine is present on residues Ser-52, Ser-77, and Ser-106. Glycyl lysine isopeptide (Lys-Gly) (interchain with G-Cter in SUMO2) cross-links involve residues Lys-123 and Lys-145. A Glycyl lysine isopeptide (Lys-Gly) (interchain with G-Cter in SUMO1); alternate cross-link involves residue Lys-174. Residues Lys-174 and Lys-177 each participate in a glycyl lysine isopeptide (Lys-Gly) (interchain with G-Cter in SUMO2); alternate cross-link. Residue Lys-177 is modified to N6-acetyllysine; alternate.

The protein belongs to the eukaryotic ribosomal protein eL13 family. In terms of assembly, component of the 60S large ribosomal subunit (LSU).

The protein resides in the cytoplasm. In terms of biological role, component of the ribosome, a large ribonucleoprotein complex responsible for the synthesis of proteins in the cell. The small ribosomal subunit (SSU) binds messenger RNAs (mRNAs) and translates the encoded message by selecting cognate aminoacyl-transfer RNA (tRNA) molecules. The large subunit (LSU) contains the ribosomal catalytic site termed the peptidyl transferase center (PTC), which catalyzes the formation of peptide bonds, thereby polymerizing the amino acids delivered by tRNAs into a polypeptide chain. The nascent polypeptides leave the ribosome through a tunnel in the LSU and interact with protein factors that function in enzymatic processing, targeting, and the membrane insertion of nascent chains at the exit of the ribosomal tunnel. As part of the LSU, it is probably required for its formation and the maturation of rRNAs. Plays a role in bone development. This chain is Large ribosomal subunit protein eL13 (RPL13), found in Cricetulus griseus (Chinese hamster).